The primary structure comprises 349 residues: Protein RecA (349 aa).

Residue 71 to 75 (SSGKT) participates in phosphate binding. ATP is bound by residues 71-76 (SSGKTT) and 102-105 (DPEY). Residue Gln196 participates in phosphate binding.

It belongs to the RecA family. Polymerizes non-specifically on ssDNA to form filaments. Interacts with and activates LexA leading to autocatalytic cleavage of LexA, which derepresses the SOS regulon and activates DNA repair.

It localises to the cytoplasm. Functionally, required for homologous recombination (HR) and the bypass of mutagenic DNA lesions (double strand breaks, DSB) by the SOS response. Can catalyze the hydrolysis of ATP in the presence of single-stranded DNA, the ATP-dependent uptake of single-stranded DNA by duplex DNA, and the ATP-dependent hybridization of homologous single-stranded DNAs. Numerous X-ray crystals have been resolved under different conditions which indicate the flexibility of the protein, essential to its function. Gln-196 contributes to this plasticity by acting as a switch residue, which transmits the effect of nucleotide binding to the DNA-binding region. In Mycolicibacterium smegmatis (strain ATCC 700084 / mc(2)155) (Mycobacterium smegmatis), this protein is Protein RecA.